Reading from the N-terminus, the 500-residue chain is UDP-N-acetylmuramoyl-L-alanyl-D-glutamate--2,6-diaminopimelate ligase (500 aa).

Ser32 contributes to the UDP-N-acetyl-alpha-D-muramoyl-L-alanyl-D-glutamate binding site. Residue 117 to 123 (GTNGKTT) participates in ATP binding. UDP-N-acetyl-alpha-D-muramoyl-L-alanyl-D-glutamate-binding positions include 159 to 160 (TT), Ser186, Gln192, and Arg194. N6-carboxylysine is present on Lys226. Meso-2,6-diaminopimelate-binding positions include Arg395, 419–422 (DNPR), Gly470, and Glu474. Positions 419–422 (DNPR) match the Meso-diaminopimelate recognition motif motif.

This sequence belongs to the MurCDEF family. MurE subfamily. Mg(2+) serves as cofactor. Post-translationally, carboxylation is probably crucial for Mg(2+) binding and, consequently, for the gamma-phosphate positioning of ATP.

It is found in the cytoplasm. The catalysed reaction is UDP-N-acetyl-alpha-D-muramoyl-L-alanyl-D-glutamate + meso-2,6-diaminopimelate + ATP = UDP-N-acetyl-alpha-D-muramoyl-L-alanyl-gamma-D-glutamyl-meso-2,6-diaminopimelate + ADP + phosphate + H(+). Its pathway is cell wall biogenesis; peptidoglycan biosynthesis. In terms of biological role, catalyzes the addition of meso-diaminopimelic acid to the nucleotide precursor UDP-N-acetylmuramoyl-L-alanyl-D-glutamate (UMAG) in the biosynthesis of bacterial cell-wall peptidoglycan. The polypeptide is UDP-N-acetylmuramoyl-L-alanyl-D-glutamate--2,6-diaminopimelate ligase (Parasynechococcus marenigrum (strain WH8102)).